Consider the following 265-residue polypeptide: Acyl-[acyl-carrier-protein]--UDP-N-acetylglucosamine O-acyltransferase (265 aa).

Belongs to the transferase hexapeptide repeat family. LpxA subfamily. In terms of assembly, homotrimer.

The protein resides in the cytoplasm. It catalyses the reaction a (3R)-hydroxyacyl-[ACP] + UDP-N-acetyl-alpha-D-glucosamine = a UDP-3-O-[(3R)-3-hydroxyacyl]-N-acetyl-alpha-D-glucosamine + holo-[ACP]. Its pathway is glycolipid biosynthesis; lipid IV(A) biosynthesis; lipid IV(A) from (3R)-3-hydroxytetradecanoyl-[acyl-carrier-protein] and UDP-N-acetyl-alpha-D-glucosamine: step 1/6. In terms of biological role, involved in the biosynthesis of lipid A, a phosphorylated glycolipid that anchors the lipopolysaccharide to the outer membrane of the cell. In Polynucleobacter asymbioticus (strain DSM 18221 / CIP 109841 / QLW-P1DMWA-1) (Polynucleobacter necessarius subsp. asymbioticus), this protein is Acyl-[acyl-carrier-protein]--UDP-N-acetylglucosamine O-acyltransferase.